We begin with the raw amino-acid sequence, 233 residues long: H-2 class II histocompatibility antigen, A-R alpha chain (233 aa).

The segment at 1 to 88 (EDDIEADHVG…KRSNFTPAAN (88 aa)) is alpha-1. Residues 1-195 (EDDIEADHVG…IPAPMSELTE (195 aa)) lie on the Extracellular side of the membrane. An alpha-2 region spans residues 89 to 182 (EAPQATVFPK…GLEEPVLKHW (94 aa)). The Ig-like C1-type domain maps to 91–183 (PQATVFPKSP…LEEPVLKHWE (93 aa)). Cysteines 111 and 167 form a disulfide. Residue N122 is glycosylated (N-linked (GlcNAc...) asparagine). The connecting peptide stretch occupies residues 183 to 195 (EPEIPAPMSELTE). The helical transmembrane segment at 196-221 (TVVCALGLSVGLVGIVVGTIFIIQGL) threads the bilayer. The Cytoplasmic segment spans residues 222 to 233 (RSGGTSRHPGPL).

The protein belongs to the MHC class II family.

The protein localises to the membrane. The sequence is that of H-2 class II histocompatibility antigen, A-R alpha chain (H2-Aa) from Mus musculus (Mouse).